Reading from the N-terminus, the 293-residue chain is Histamine N-methyltransferase A (293 aa).

Glu-28 is a substrate binding site. S-adenosyl-L-methionine-binding residues include Gly-60, Glu-89, Gln-94, Ser-120, and Ile-142. A substrate-binding site is contributed by Asn-283.

It belongs to the class I-like SAM-binding methyltransferase superfamily. HNMT family. In terms of assembly, monomer.

Its subcellular location is the cytoplasm. The enzyme catalyses histamine + S-adenosyl-L-methionine = N(tau)-methylhistamine + S-adenosyl-L-homocysteine + H(+). Inactivates histamine by N-methylation. Plays an important role in degrading histamine and in regulating the airway response to histamine. This chain is Histamine N-methyltransferase A (hnmt-a), found in Xenopus laevis (African clawed frog).